The chain runs to 155 residues: Small ribosomal subunit protein uS7c (155 aa).

Belongs to the universal ribosomal protein uS7 family. In terms of assembly, part of the 30S ribosomal subunit.

It is found in the plastid. The protein resides in the chloroplast. One of the primary rRNA binding proteins, it binds directly to 16S rRNA where it nucleates assembly of the head domain of the 30S subunit. The sequence is that of Small ribosomal subunit protein uS7c (rps7) from Schisandra chinensis (Chinese magnolia vine).